Reading from the N-terminus, the 115-residue chain is Virulence-associated protein A' (115 aa).

Positions Ile-16–Phe-70 constitute an HTH cro/C1-type domain. The segment at residues Ile-27–Asn-46 is a DNA-binding region (H-T-H motif).

This sequence belongs to the VapA/VapI family.

The chain is Virulence-associated protein A' (vapA') from Dichelobacter nodosus (Bacteroides nodosus).